Here is a 139-residue protein sequence, read N- to C-terminus: Putative general secretion pathway protein B (139 aa).

A helical membrane pass occupies residues 28–48 (IIYVICLLLICLWFAGMVLVG). Residues 93-139 (VEEEDDPGVAVENAPSSSEDEENTVEESEEKAGLRERVKNALNELER) are disordered. Residues 110–121 (SEDEENTVEESE) are compositionally biased toward acidic residues. The segment covering 122–139 (EKAGLRERVKNALNELER) has biased composition (basic and acidic residues).

It localises to the cell membrane. Functionally, part of a cryptic operon that encodes proteins involved in type II secretion pathway in other organisms, but is not expressed in strain K12 under standard laboratory conditions. May play a regulatory role under conditions of derepressed gsp gene expression. The polypeptide is Putative general secretion pathway protein B (Escherichia coli (strain K12)).